Here is a 194-residue protein sequence, read N- to C-terminus: MALVPMVVEQTSRGERSYDIFSRLLKERIIFMTGQVEDHMANLIVAQMMFLEAENPEKDIYLYINSPGGVITAGMSIYDTMQFIKPDVSTFCMGQAASMGAFLLAAGAKGKRFCLPNSRVMIHQPLGGFQGQATDIEIHAREILKVKARMNELMAKHTGQPLEVIERDTERDRFLSAPEAVDYGLVDSVLSQRT.

Catalysis depends on S98, which acts as the Nucleophile. H123 is a catalytic residue.

The protein belongs to the peptidase S14 family. As to quaternary structure, fourteen ClpP subunits assemble into 2 heptameric rings which stack back to back to give a disk-like structure with a central cavity, resembling the structure of eukaryotic proteasomes.

The protein resides in the cytoplasm. The catalysed reaction is Hydrolysis of proteins to small peptides in the presence of ATP and magnesium. alpha-casein is the usual test substrate. In the absence of ATP, only oligopeptides shorter than five residues are hydrolyzed (such as succinyl-Leu-Tyr-|-NHMec, and Leu-Tyr-Leu-|-Tyr-Trp, in which cleavage of the -Tyr-|-Leu- and -Tyr-|-Trp bonds also occurs).. In terms of biological role, cleaves peptides in various proteins in a process that requires ATP hydrolysis. Has a chymotrypsin-like activity. Plays a major role in the degradation of misfolded proteins. The polypeptide is ATP-dependent Clp protease proteolytic subunit (Sodalis glossinidius (strain morsitans)).